The sequence spans 312 residues: Beta-ketoacyl-[acyl-carrier-protein] synthase III 1 (312 aa).

Active-site residues include Cys113 and His237. An ACP-binding region spans residues 238–242 (QANIR). Residue Asn267 is part of the active site.

It belongs to the thiolase-like superfamily. FabH family. In terms of assembly, homodimer.

Its subcellular location is the cytoplasm. It catalyses the reaction malonyl-[ACP] + acetyl-CoA + H(+) = 3-oxobutanoyl-[ACP] + CO2 + CoA. The protein operates within lipid metabolism; fatty acid biosynthesis. Functionally, catalyzes the condensation reaction of fatty acid synthesis by the addition to an acyl acceptor of two carbons from malonyl-ACP. Catalyzes the first condensation reaction which initiates fatty acid synthesis and may therefore play a role in governing the total rate of fatty acid production. Possesses both acetoacetyl-ACP synthase and acetyl transacylase activities. Its substrate specificity determines the biosynthesis of branched-chain and/or straight-chain of fatty acids. In Halalkalibacterium halodurans (strain ATCC BAA-125 / DSM 18197 / FERM 7344 / JCM 9153 / C-125) (Bacillus halodurans), this protein is Beta-ketoacyl-[acyl-carrier-protein] synthase III 1.